A 1069-amino-acid polypeptide reads, in one-letter code: Protocadherin-7 (1069 aa).

Residues Met-1 to Ala-28 form the signal peptide. Cadherin domains are found at residues Ala-29 to Phe-143, Pro-144 to Phe-308, Glu-309 to Ile-415, Pro-424 to Phe-535, Gly-536 to Phe-639, Met-640 to Val-742, and Pro-745 to Thr-862. Residues Ala-29 to Ser-879 are Extracellular-facing. The N-linked (GlcNAc...) asparagine glycan is linked to Asn-79. Residues Leu-182–Ser-242 form a disordered region. Gly residues predominate over residues Pro-207 to Gly-221. N-linked (GlcNAc...) asparagine glycosylation is found at Asn-689, Asn-747, Asn-780, Asn-822, Asn-840, and Asn-845. The helical transmembrane segment at Ile-880–Met-900 threads the bilayer. Topologically, residues Ala-901–Gly-1069 are cytoplasmic. The tract at residues Asn-910 to Gly-988 is disordered. Over residues Lys-930–Lys-944 the composition is skewed to basic residues. Ser-989 and Ser-1011 each carry phosphoserine.

As to expression, expressed predominantly in brain and heart and at lower levels in various other tissues.

The protein resides in the cell membrane. This is Protocadherin-7 (PCDH7) from Homo sapiens (Human).